Reading from the N-terminus, the 87-residue chain is Cell division topological specificity factor (87 aa).

This sequence belongs to the MinE family.

In terms of biological role, prevents the cell division inhibition by proteins MinC and MinD at internal division sites while permitting inhibition at polar sites. This ensures cell division at the proper site by restricting the formation of a division septum at the midpoint of the long axis of the cell. In Chelativorans sp. (strain BNC1), this protein is Cell division topological specificity factor.